The sequence spans 461 residues: Piperine synthase (461 aa).

Active-site proton acceptor residues include histidine 168 and aspartate 387. Residues 459–461 (SRM) carry the Microbody targeting signal motif.

This sequence belongs to the plant acyltransferase family. In terms of assembly, monomer. In terms of tissue distribution, confined to immature fruits perisperm. Also detectable in roots.

It localises to the cytoplasm. It catalyses the reaction piperidine + (E,E)-piperoyl-CoA = piperine + CoA + H(+). The catalysed reaction is pyrrolidine + (E,E)-piperoyl-CoA = piperyline + CoA + H(+). It carries out the reaction (E,E)-piperoyl-CoA + 2-methylpropan-1-amine = (E,E)-piperlonguminine + CoA + H(+). It participates in aromatic compound metabolism. Involved in the biosynthesis of aromatic piperamides natural products such as piperine (1-piperoyl-piperidine), the pungent principle contributing, together with several terpenoids, to the aromatic properties of black pepper fruits, and displaying numerous pharmacological activities such as antiproliferative, antitumor, antiangiogenesis, antioxidant, antidiabetic, antiobesity, cardioprotective, antimicrobial, antiaging, and immunomodulatory effects. Mediates mainly the conversion of piperidine and piperoyl-CoA to piperine. Can also use pyrrolidine and isobutylamine as acceptors and 3,4-methylenedioxycinnamoyl-CoA as an alternative CoA-donor with a lower efficiency. This is Piperine synthase from Piper nigrum (Black pepper).